A 159-amino-acid polypeptide reads, in one-letter code: Endoribonuclease YbeY (159 aa).

Zn(2+) is bound by residues His-126, His-130, and His-136.

The protein belongs to the endoribonuclease YbeY family. Zn(2+) serves as cofactor.

The protein localises to the cytoplasm. Its function is as follows. Single strand-specific metallo-endoribonuclease involved in late-stage 70S ribosome quality control and in maturation of the 3' terminus of the 16S rRNA. This Thermodesulfovibrio yellowstonii (strain ATCC 51303 / DSM 11347 / YP87) protein is Endoribonuclease YbeY.